We begin with the raw amino-acid sequence, 806 residues long: Minor extracellular protease Vpr (806 aa).

A signal peptide spans 1–28 (MKKGIIRFLLVSFVLFFALSTGITGVQA). Positions 29-160 (APASSKTSAD…TISEDAVSPQ (132 aa)) are excised as a propeptide. One can recognise an Inhibitor I9 domain in the interval 57-142 (TVIVELKEKS…AVYPNVTYKT (86 aa)). In terms of domain architecture, Peptidase S8 spans 158–597 (SPQMDDSAPY…ARIMNAIKAD (440 aa)). Catalysis depends on charge relay system residues Asp-189 and His-233. Positions 383–461 (ELVEAGIGEA…KLSLEDGEKL (79 aa)) constitute a PA domain. The active-site Charge relay system is the Ser-534.

This sequence belongs to the peptidase S8 family. In terms of processing, probably undergoes C-terminal processing or proteolysis. Auto-processed to form active enzymes of several different molecular weights.

The protein resides in the secreted. It localises to the cell wall. With respect to regulation, activity is inhibited by phenylmethylsulfonyl fluoride (PMSF), but not by EDTA. Its function is as follows. Serine protease. Involved in the production of the competence and sporulation stimulating factor CSF. Is directly involved in the processing of pro-CSF to CSF. Can also cleave pro-PhrA to PhrA, but cannot cleave pro-PhrE. Shows fibrinolytic activity in vitro. Not essential for growth or sporulation. This chain is Minor extracellular protease Vpr, found in Bacillus subtilis (strain 168).